The following is a 331-amino-acid chain: UDP-GalNAc:beta-1,3-N-acetylgalactosaminyltransferase 1 (331 aa).

At 1-20 (MAPALPITLPSKMSLRSLKW) the chain is on the cytoplasmic side. Residues 21-43 (SLLLLSLLSFLVMWYLSLPHYNV) form a helical; Signal-anchor for type II membrane protein membrane-spanning segment. The Lumenal segment spans residues 44–331 (IERVNWMYFY…VMLRNTTCHY (288 aa)). 5 N-linked (GlcNAc...) asparagine glycosylation sites follow: N72, N154, N198, N212, and N326.

This sequence belongs to the glycosyltransferase 31 family. The cofactor is Mg(2+).

The protein resides in the golgi apparatus membrane. The enzyme catalyses a globoside Gb3Cer (d18:1(4E)) + UDP-N-acetyl-alpha-D-galactosamine = a globoside Gb4Cer (d18:1(4E)) + UDP + H(+). The protein operates within protein modification; protein glycosylation. Functionally, transfers N-acetylgalactosamine onto globotriaosylceramide. Plays a critical role in preimplantation stage embryonic development. In Sus scrofa (Pig), this protein is UDP-GalNAc:beta-1,3-N-acetylgalactosaminyltransferase 1 (B3GALNT1).